Reading from the N-terminus, the 332-residue chain is Glyceraldehyde-3-phosphate dehydrogenase 1 (332 aa).

4 residues coordinate NAD(+): R11, I12, D33, and T120. D-glyceraldehyde 3-phosphate contacts are provided by residues 149–151 (SCT), T180, 209–210 (TG), and R232. C150 (nucleophile) is an active-site residue. The NAD(+) site is built by N314 and Y318.

The protein belongs to the glyceraldehyde-3-phosphate dehydrogenase family. As to quaternary structure, homotetramer.

It is found in the cytoplasm. The enzyme catalyses D-glyceraldehyde 3-phosphate + phosphate + NAD(+) = (2R)-3-phospho-glyceroyl phosphate + NADH + H(+). It catalyses the reaction NADH + H2O = (6R)-NADHX. It carries out the reaction NADH + H2O = (6S)-NADHX. The catalysed reaction is NADPH + H2O = (6R)-NADPHX. The enzyme catalyses NADPH + H2O = (6S)-NADPHX. It functions in the pathway carbohydrate degradation; glycolysis; pyruvate from D-glyceraldehyde 3-phosphate: step 1/5. Functionally, glyceraldehyde-3-phosphate dehydrogenase (GAPDH) involved in glycolysis and gluconeogenesis. Catalyzes the reaction of glyceraldehyde-3-phosphate to 1,3 bis-phosphoglycerate. The contribution of the TDH1, TDH2, and TDH3 to the total glyceraldehyde-3-phosphate dehydrogenase activity is 10-15, 25-30, and 50-60%, respectively. May be involved in a process other than glycolysis because it is synthesized by cells in stationary phase. Its function is as follows. As a side activity, catalyzes the hydration of the nicotinamide ring of NADH or NADPH at the C6 position to give the corresponding hydrates, NADHX and NADPHX, which exist as R and S epimers, that cannot act as electron donors or acceptors and inhibit several dehydrogenases, making them toxic. This Saccharomyces cerevisiae (strain ATCC 204508 / S288c) (Baker's yeast) protein is Glyceraldehyde-3-phosphate dehydrogenase 1.